Here is a 1433-residue protein sequence, read N- to C-terminus: DNA-directed RNA polymerase subunit beta' (1433 aa).

Zn(2+) is bound by residues Cys-66, Cys-68, Cys-81, and Cys-84. The interval 328-347 (RKSSAVKTDSNRPLKSLSDS) is disordered. Over residues 329–346 (KSSAVKTDSNRPLKSLSD) the composition is skewed to polar residues. Residues Asp-477, Asp-479, and Asp-481 each coordinate Mg(2+). Positions 825, 899, 906, and 909 each coordinate Zn(2+).

It belongs to the RNA polymerase beta' chain family. The RNAP catalytic core consists of 2 alpha, 1 beta, 1 beta' and 1 omega subunit. When a sigma factor is associated with the core the holoenzyme is formed, which can initiate transcription. Requires Mg(2+) as cofactor. Zn(2+) is required as a cofactor.

It carries out the reaction RNA(n) + a ribonucleoside 5'-triphosphate = RNA(n+1) + diphosphate. Its function is as follows. DNA-dependent RNA polymerase catalyzes the transcription of DNA into RNA using the four ribonucleoside triphosphates as substrates. The sequence is that of DNA-directed RNA polymerase subunit beta' from Christiangramia forsetii (strain DSM 17595 / CGMCC 1.15422 / KT0803) (Gramella forsetii).